The chain runs to 335 residues: N-acetylmuramoyl-L-alanine amidase sle1 (335 aa).

Positions 1–25 (MQKKVIAAIIGTSAISAVAATQANA) are cleaved as a signal peptide. One can recognise a LysM 1 domain in the interval 27–70 (TTHTVKPGESVWAISNKYGISIAKLKSLNNLTSNLIFPNQVLKV). Residues 71 to 86 (SGSSNSTSNSSRPSTN) are compositionally biased toward low complexity. The segment at 71–90 (SGSSNSTSNSSRPSTNSGGG) is disordered. 2 consecutive LysM domains span residues 91–134 (SYYT…KLKV) and 158–201 (SYYT…KLKV). Residues 211-335 (ASATTTNRGY…YQVNNYRYIH (125 aa)) enclose the Peptidase C51 domain.

The protein localises to the secreted. The protein resides in the cell surface. It carries out the reaction Hydrolyzes the link between N-acetylmuramoyl residues and L-amino acid residues in certain cell-wall glycopeptides.. Its function is as follows. Peptidoglycan hydrolase involved in the splitting of the septum during cell division. The protein is N-acetylmuramoyl-L-alanine amidase sle1 (sle1) of Staphylococcus aureus (strain bovine RF122 / ET3-1).